The sequence spans 79 residues: Acyl carrier protein (79 aa).

Residues 3 to 78 (QEILEKVCSI…DAVKFIEEKK (76 aa)) form the Carrier domain. O-(pantetheine 4'-phosphoryl)serine is present on S38.

It belongs to the acyl carrier protein (ACP) family. Post-translationally, 4'-phosphopantetheine is transferred from CoA to a specific serine of apo-ACP by AcpS. This modification is essential for activity because fatty acids are bound in thioester linkage to the sulfhydryl of the prosthetic group.

The protein localises to the cytoplasm. It functions in the pathway lipid metabolism; fatty acid biosynthesis. In terms of biological role, carrier of the growing fatty acid chain in fatty acid biosynthesis. This chain is Acyl carrier protein, found in Prochlorococcus marinus (strain MIT 9312).